A 314-amino-acid polypeptide reads, in one-letter code: MAPAETTGNVQRPEAGKQSMGSFWTQMFPPKPTYTEEQVPDLTGKIFIVTGSSSGVGKEAARMLYAKNAKVYMAARPGPKLPAAINSVQEAVPKSGGALIPLELDLADLAVVKKAVEKFTSLETKLHGLINNAAVQALKDTDGDARTAQGHEIHMGVNVLAPFLFTRLLTGVLTATARQEPPGTVRVVWVSSMGTETIGEKRRGLSPDYVDYWPLMSPLERYGLSKAGNWLHGVEFARRYAADGIASFPINPGHLKSDLYREGGALFKFALKPVLYPPTYGAYVELFAALSPTLTLKDSGAWSKYVEMVYFPDC.

Over residues 1 to 10 (MAPAETTGNV) the composition is skewed to polar residues. The interval 1–27 (MAPAETTGNVQRPEAGKQSMGSFWTQM) is disordered. NADP(+) contacts are provided by V56, K80, D105, N132, and R167. The Proton donor role is filled by S191. NADP(+) contacts are provided by Y222 and K226. The Proton acceptor role is filled by Y222. K226 serves as the catalytic Lowers pKa of active site Tyr.

The protein belongs to the short-chain dehydrogenases/reductases (SDR) family.

It catalyses the reaction dehydroprobetaenone I + AH2 = probetaenone I + A. The catalysed reaction is betaenone C + AH2 = betaenone B + A. Its pathway is mycotoxin biosynthesis. Functionally, short-chain dehydrogenase/reductase; part of the gene cluster that mediates the biosynthesis of the phytotoxin stemphyloxin II. The first step of the pathway is the synthesis of dehydroprobetaenone I by the polyketide synthase sthA and the enoyl reductase sthE via condensation of one acetyl-CoA starter unit with 7 malonyl-CoA units and 5 methylations. The C-terminal reductase (R) domain of sthA catalyzes the reductive release of the polyketide chain. Because sthA lacks a designated enoylreductase (ER) domain, the required activity is provided the enoyl reductase sthE. The short-chain dehydrogenase/reductase sthC then catalyzes reduction of dehydroprobetaenone I to probetaenone I. The cytochrome P450 monooxygenase sthF catalyzes successive epoxidation, oxidation (resulting from epoxide opening) and hydroxylation to install a tertiary alcohol in the decaline ring to yield betaenone C from dehydroprobetaenone I and betaenone B from probetaenone I. The FAD-linked oxidoreductase sthB is responsible for the conversion of betaenone C to betaenone A via an intramolecular aldol reaction between C-1 and C-17 to form the bridged tricyclic system in betaenone A. Finally, the cytochrome P450 monooxygenase sthD catalyzes the hydroxylation of C-15 to afford the final metabolite stemphyloxin II. This is Short-chain dehydrogenase/reductase sthC from Phaeosphaeria nodorum (strain SN15 / ATCC MYA-4574 / FGSC 10173) (Glume blotch fungus).